The sequence spans 184 residues: Probable DNA-directed RNA polymerase subunit delta (184 aa).

Residues 14 to 82 (KSFIDMAHTL…GENNWGLRDW (69 aa)) enclose the HTH HARE-type domain. The segment at 114-184 (LLGEEEEEID…FNDDPDDDKI (71 aa)) is disordered. Positions 117 to 184 (EEEEEIDDQE…FNDDPDDDKI (68 aa)) are enriched in acidic residues.

The protein belongs to the RpoE family. As to quaternary structure, RNAP is composed of a core of 2 alpha, a beta and a beta' subunits. The core is associated with a delta subunit and one of several sigma factors.

Participates in both the initiation and recycling phases of transcription. In the presence of the delta subunit, RNAP displays an increased specificity of transcription, a decreased affinity for nucleic acids, and an increased efficiency of RNA synthesis because of enhanced recycling. This Staphylococcus carnosus (strain TM300) protein is Probable DNA-directed RNA polymerase subunit delta.